A 506-amino-acid polypeptide reads, in one-letter code: MANNRRDRDKGDGSQGEGLSAGGGMPSEPEIVSVTVHPTPTLAVSLKPAQQGDIWASLLESSPWSANHGGRIEPVQPSPAPTRPTESPSVGDLVSRWSQPIWRTPSRVEEVETPESNFVIELEASQPITSDITVSVSDLVIEVQPIQTTEAEPEPELPVAEPEPGVVPVDVVAEAEPEPELPVAEPEPGVVPVDVVAEAEPEPELPVAEPEPEVVPVDVVAEAEPEPELPVAEPEPEVVPVDVVAEAEPEPELPVAEPEPEVVPVDVVAEAEPEPELPVAAPEPEVLPVEVVAEAEPEPELPVAAPEPEVLPVEVVAEAEPEPELPVAAPEPEVVPVDVVAEAEPEPELPVAEPELVHEAAVSEPVAESIEDAVAVPAPATNFGLAELMQAAAAMAPVLASPPSVAPAAKPVREPAKKRKAPPVRKKVATVQDVPVEDLLGGIFGIAGSAVRSVLSLGAGVVGGVVKGGRVIGDNVVAGARRLTGSAEGSCGTCSTSQCDTVGKKK.

Residues 1–12 (MANNRRDRDKGD) are compositionally biased toward basic and acidic residues. Disordered regions lie at residues 1-36 (MANN…SVTV) and 63-93 (PWSA…VGDL). A compositionally biased stretch (gly residues) spans 13 to 25 (GSQGEGLSAGGGM). 8 Acidic repeat repeats span residues 150–173 (EAEP…DVVA), 174–197 (EAEP…DVVA), 198–221 (EAEP…DVVA), 222–245 (EAEP…DVVA), 246–269 (EAEP…DVVA), 270–293 (EAEP…EVVA), 294–317 (EAEP…EVVA), and 318–341 (EAEP…DVVA). One copy of the Acidic repeat 8.5 repeat lies at 342–355 (EAEPEPELPVAEPE). The interval 405 to 424 (VAPAAKPVREPAKKRKAPPV) is disordered.

This sequence belongs to the magnetosome MamJ protein family. As to quaternary structure, forms homooligomers. Interacts with MamK.

The protein resides in the magnetosome. Its function is as follows. Regulates the dynamic behavior of MamK filaments; paralog LimJ also promotes MamK turnover. At least one other protein besides MamJ and LimJ is required for MamK turnover. May connect magnetosomes to MamK filaments. Moves from the cell poles towards midcell; movement does not depend on the treadmilling ability of MamK, suggesting MamJ associates and disassociates continuously from the MamK filament. In Paramagnetospirillum magneticum (strain ATCC 700264 / AMB-1) (Magnetospirillum magneticum), this protein is Magnetosome-associated protein MamJ (mamJ).